Consider the following 148-residue polypeptide: NADH-ubiquinone oxidoreductase chain 3 (148 aa).

The next 3 helical transmembrane spans lie at 19–39 (FYMILVPIISIVLIIINYIIT), 70–90 (FILIAILFLPFDLELTSILPY), and 99–119 (IYGLFILLYFLLPLIIGFIIE).

Belongs to the complex I subunit 3 family.

The protein localises to the mitochondrion membrane. It carries out the reaction a ubiquinone + NADH + 5 H(+)(in) = a ubiquinol + NAD(+) + 4 H(+)(out). In terms of biological role, core subunit of the mitochondrial membrane respiratory chain NADH dehydrogenase (Complex I) that is believed to belong to the minimal assembly required for catalysis. Complex I functions in the transfer of electrons from NADH to the respiratory chain. The immediate electron acceptor for the enzyme is believed to be ubiquinone. This Wickerhamomyces canadensis (Yeast) protein is NADH-ubiquinone oxidoreductase chain 3 (ND3).